A 62-amino-acid chain; its full sequence is Photosystem II reaction center protein Z (62 aa).

2 consecutive transmembrane segments (helical) span residues 8 to 28 and 41 to 61; these read AVFALIVTSSILLISVPVVFA and FSGTSLWIGLVFLVGILNSLI.

It belongs to the PsbZ family. As to quaternary structure, PSII is composed of 1 copy each of membrane proteins PsbA, PsbB, PsbC, PsbD, PsbE, PsbF, PsbH, PsbI, PsbJ, PsbK, PsbL, PsbM, PsbT, PsbY, PsbZ, Psb30/Ycf12, at least 3 peripheral proteins of the oxygen-evolving complex and a large number of cofactors. It forms dimeric complexes.

It is found in the plastid. Its subcellular location is the chloroplast thylakoid membrane. Functionally, may control the interaction of photosystem II (PSII) cores with the light-harvesting antenna, regulates electron flow through the 2 photosystem reaction centers. PSII is a light-driven water plastoquinone oxidoreductase, using light energy to abstract electrons from H(2)O, generating a proton gradient subsequently used for ATP formation. This chain is Photosystem II reaction center protein Z, found in Cucumis sativus (Cucumber).